We begin with the raw amino-acid sequence, 426 residues long: Glutamate-1-semialdehyde 2,1-aminomutase (426 aa).

K265 is modified (N6-(pyridoxal phosphate)lysine).

This sequence belongs to the class-III pyridoxal-phosphate-dependent aminotransferase family. HemL subfamily. As to quaternary structure, homodimer. Requires pyridoxal 5'-phosphate as cofactor.

It localises to the cytoplasm. The enzyme catalyses (S)-4-amino-5-oxopentanoate = 5-aminolevulinate. It participates in porphyrin-containing compound metabolism; protoporphyrin-IX biosynthesis; 5-aminolevulinate from L-glutamyl-tRNA(Glu): step 2/2. The polypeptide is Glutamate-1-semialdehyde 2,1-aminomutase (Salmonella gallinarum (strain 287/91 / NCTC 13346)).